We begin with the raw amino-acid sequence, 604 residues long: Cell division cycle protein CDT1 (604 aa).

The protein belongs to the Cdt1 family. As to quaternary structure, associates with the MCM2-7 complex. Interacts with MCM2, ORC1, ORC2 and ORC6.

The protein resides in the cytoplasm. It localises to the nucleus. Functionally, DNA replication licensing factor, required for pre-replication complex assembly. Faithful duplication of the genetic material requires 'once per cell cycle' DNA replication initiation and elongation. Central to this control is the tightly regulated formation of prereplicative complexes (preRCs) at future origins of DNA replication. Required for the recruitment of the MCM2-7 helicase complex to the replication origins. The protein is Cell division cycle protein CDT1 (TAH11) of Saccharomyces cerevisiae (strain ATCC 204508 / S288c) (Baker's yeast).